The sequence spans 774 residues: Two pore channel protein 2 (774 aa).

At 1 to 92 (MEEEPLLAGS…GSLRLYRWYY (92 aa)) the chain is on the cytoplasmic side. A helical transmembrane segment spans residues 93-113 (SNLCQWGLGLTIAVVLALAFI). Over 114–140 (ERPSSLTYTSDIRVKPKPWEPPCGMTE) the chain is Extracellular. Residues 141–161 (GIEIVCLCIFILDVTAKGYLI) traverse the membrane as a helical segment. At 162 to 170 (GWEEFRMNK) the chain is on the cytoplasmic side. A helical membrane pass occupies residues 171-191 (WLLAYLIVITASVIDWMLSIS). Topologically, residues 192 to 197 (MLCDEN) are extracellular. The chain crosses the membrane as a helical span at residues 198–218 (LRVRRLIRPFFLLQNSSLMKK). Positions 217-221 (KKTLK) are interaction with phosphatidylinositol 3,5-bisphosphate. Residues 219 to 232 (TLKCIKRTLPEIAS) lie on the Cytoplasmic side of the membrane. The helical transmembrane segment at 233 to 253 (VILLLALHICLFTMIGMLIFA) threads the bilayer. Residues 254–267 (KSDDPKQNGEWQTY) lie on the Extracellular side of the membrane. The helical; Pore-forming intramembrane region spans 268–292 (FRNLPKALSSLLVLLTTANNPDVMI). Residues 293-302 (PAYSLNRGYS) lie on the Extracellular side of the membrane. The chain crosses the membrane as a helical span at residues 303–323 (IFFILFSVFGTYLLMNLMTAI). The Cytoplasmic segment spans residues 324–452 (IYNQFRGYLL…YVYSHYYISV (129 aa)). A helical membrane pass occupies residues 453-475 (LGNAVALANVICICTVLVLNAEK). Residues 476–486 (SASEKNYFYME) lie on the Extracellular side of the membrane. Residues 487–507 (IINCIFILYYLIEMLLKIVAF) traverse the membrane as a helical segment. Over 508 to 518 (GWKGYLSYRNN) the chain is Cytoplasmic. The helical transmembrane segment at 519 to 539 (IFDGFLTVLLLAIQIVIFITF) threads the bilayer. At 540–564 (KIPYVDVDPVPRHVMALWEMIRLVN) the chain is on the extracellular side. The chain crosses the membrane as a helical span at residues 565 to 585 (MLIVFRFLRIIPEIKLMAVVA). Over 586–596 (STIVDLVKNLR) the chain is Cytoplasmic. A helical transmembrane segment spans residues 597–617 (AFAGILLVVYYMFAVLGIWLF). Over 618-658 (QGAISPPSNMSLVSNSSLENITGPYSMECGTFEQLEYWPNN) the chain is Extracellular. N-linked (GlcNAc...) asparagine glycans are attached at residues asparagine 626, asparagine 632, and asparagine 637. Residues 659–681 (FDDFASSLILLYNIMVVNNWHVF) constitute an intramembrane region (helical; Pore-forming). Topologically, residues 682 to 696 (TDAYARYTTDWSLVY) are extracellular. Residues 697-717 (FVVWWLTSSVMWVNLFVALIL) traverse the membrane as a helical segment. At 718–774 (ENFTYKWDRSNGLSVEDVERIAYQSTVQLMFKEHVKEPTEEELLAQLHQHPHLHLSW) the chain is on the cytoplasmic side.

Belongs to the calcium channel alpha-1 subunit (TC 1.A.1.11) family. Two pore calcium channel subfamily. Homodimer. Post-translationally, N-glycosylated.

Its subcellular location is the late endosome membrane. The protein localises to the lysosome membrane. The catalysed reaction is Na(+)(in) = Na(+)(out). It carries out the reaction Ca(2+)(in) = Ca(2+)(out). In terms of biological role, intracellular channel initially characterized as a non-selective Ca(2+)-permeable channel activated by NAADP (nicotinic acid adenine dinucleotide phosphate), it is also a highly-selective Na(+) channel activated directly by PI(3,5)P2 (phosphatidylinositol 3,5-bisphosphate). Localizes to the lysosomal and late endosome membranes where it regulates organellar membrane excitability, membrane trafficking, and pH homeostasis. This is Two pore channel protein 2 (tpcn2) from Danio rerio (Zebrafish).